The sequence spans 123 residues: Large ribosomal subunit protein uL29 (123 aa).

This sequence belongs to the universal ribosomal protein uL29 family.

The protein is Large ribosomal subunit protein uL29 (RPL35) of Babesia bovis.